Here is a 138-residue protein sequence, read N- to C-terminus: Basic phospholipase A2 sistruxin B (138 aa).

A signal peptide spans methionine 1–glycine 16. 7 disulfide bridges follow: cysteine 42–cysteine 131, cysteine 44–cysteine 60, cysteine 59–cysteine 111, cysteine 65–cysteine 138, cysteine 66–cysteine 104, cysteine 73–cysteine 97, and cysteine 91–cysteine 102. Ca(2+)-binding residues include tyrosine 43, glycine 45, and glycine 47. Histidine 63 is an active-site residue. Aspartate 64 contacts Ca(2+). Aspartate 105 is a catalytic residue.

As to quaternary structure, heterodimer of an acidic subunit and a basic chain. The acidic subunit is non-toxic, without enzymatic activity and comprises 3 peptides that are cross-linked by 7 disulfide bridges. The basic subunit is toxic, has phospholipase A2 activity and is composed of a single chain. It depends on Ca(2+) as a cofactor. Expressed by the venom gland.

Its subcellular location is the secreted. It catalyses the reaction a 1,2-diacyl-sn-glycero-3-phosphocholine + H2O = a 1-acyl-sn-glycero-3-phosphocholine + a fatty acid + H(+). Functionally, snake venom phospholipase A2 (PLA2) that shows presynaptic neurotoxicity. PLA2 catalyzes the calcium-dependent hydrolysis of the 2-acyl groups in 3-sn-phosphoglycerides. This chain is Basic phospholipase A2 sistruxin B, found in Sistrurus tergeminus (Western massasauga).